Here is a 61-residue protein sequence, read N- to C-terminus: Bacteriocin sakacin-P (61 aa).

The propeptide occupies 1-18; the sequence is MEKFIELSLKEVTAITGG. Cys-27 and Cys-32 are oxidised to a cystine.

This sequence belongs to the bacteriocin class IIA/YGNGV family.

It is found in the secreted. In terms of biological role, bactericidal activity; inhibits closely related Lactobacilli, Listeria monocytogenes and ivanovvi, Enterococcus faecalis, Carnobacterium sp and Brocothrix thermosphacta. This chain is Bacteriocin sakacin-P (sakP), found in Latilactobacillus sakei (Lactobacillus sakei).